The following is a 110-amino-acid chain: Large ribosomal subunit protein uL22 (110 aa).

It belongs to the universal ribosomal protein uL22 family. In terms of assembly, part of the 50S ribosomal subunit.

This protein binds specifically to 23S rRNA; its binding is stimulated by other ribosomal proteins, e.g. L4, L17, and L20. It is important during the early stages of 50S assembly. It makes multiple contacts with different domains of the 23S rRNA in the assembled 50S subunit and ribosome. Its function is as follows. The globular domain of the protein is located near the polypeptide exit tunnel on the outside of the subunit, while an extended beta-hairpin is found that lines the wall of the exit tunnel in the center of the 70S ribosome. The polypeptide is Large ribosomal subunit protein uL22 (Nitrosococcus oceani (strain ATCC 19707 / BCRC 17464 / JCM 30415 / NCIMB 11848 / C-107)).